A 181-amino-acid polypeptide reads, in one-letter code: Peptidyl-tRNA hydrolase (181 aa).

Position 14 (Tyr14) interacts with tRNA. The Proton acceptor role is filled by His19. 3 residues coordinate tRNA: Phe61, Asn63, and Asn107.

Belongs to the PTH family. In terms of assembly, monomer.

Its subcellular location is the cytoplasm. It catalyses the reaction an N-acyl-L-alpha-aminoacyl-tRNA + H2O = an N-acyl-L-amino acid + a tRNA + H(+). Functionally, hydrolyzes ribosome-free peptidyl-tRNAs (with 1 or more amino acids incorporated), which drop off the ribosome during protein synthesis, or as a result of ribosome stalling. Catalyzes the release of premature peptidyl moieties from peptidyl-tRNA molecules trapped in stalled 50S ribosomal subunits, and thus maintains levels of free tRNAs and 50S ribosomes. This is Peptidyl-tRNA hydrolase from Campylobacter fetus subsp. fetus (strain 82-40).